Reading from the N-terminus, the 229-residue chain is 7-cyano-7-deazaguanine synthase (229 aa).

Residue 9-19 (LSGGLDSATVL) coordinates ATP. Zn(2+)-binding residues include Cys188, Cys198, Cys201, and Cys204.

The protein belongs to the QueC family. The cofactor is Zn(2+).

The catalysed reaction is 7-carboxy-7-deazaguanine + NH4(+) + ATP = 7-cyano-7-deazaguanine + ADP + phosphate + H2O + H(+). It participates in purine metabolism; 7-cyano-7-deazaguanine biosynthesis. Catalyzes the ATP-dependent conversion of 7-carboxy-7-deazaguanine (CDG) to 7-cyano-7-deazaguanine (preQ(0)). This chain is 7-cyano-7-deazaguanine synthase, found in Methylobacillus flagellatus (strain ATCC 51484 / DSM 6875 / VKM B-1610 / KT).